We begin with the raw amino-acid sequence, 206 residues long: MAVRSKSSKAWLHEHINDQYVHMAQKDGYRARAAYKLLEINEKDKIIKPGTVLADLGSAPGSWSQVAAKLTGTSGAVFALDILPMEAIGGVSFIQGDFRENDVLAQFETLLDNRPLDLVICDMAPNMSGNAVSDQARSFYLCELALDFASQHLKTGGSFLVKVFQGAGYQEYMAAMREIFGTVQTRKPEASRNRSSEIYLLGKNKR.

The S-adenosyl-L-methionine site is built by Gly61, Trp63, Asp81, Asp97, and Asp122. Catalysis depends on Lys162, which acts as the Proton acceptor.

Belongs to the class I-like SAM-binding methyltransferase superfamily. RNA methyltransferase RlmE family.

The protein resides in the cytoplasm. The enzyme catalyses uridine(2552) in 23S rRNA + S-adenosyl-L-methionine = 2'-O-methyluridine(2552) in 23S rRNA + S-adenosyl-L-homocysteine + H(+). Its function is as follows. Specifically methylates the uridine in position 2552 of 23S rRNA at the 2'-O position of the ribose in the fully assembled 50S ribosomal subunit. The protein is Ribosomal RNA large subunit methyltransferase E of Neisseria gonorrhoeae (strain ATCC 700825 / FA 1090).